A 172-amino-acid chain; its full sequence is RNA pyrophosphohydrolase (172 aa).

Residues 6 to 149 (GYRLNVGIVI…KRDVYRRAMK (144 aa)) enclose the Nudix hydrolase domain. The Nudix box motif lies at 38-59 (GGIDDGESPEQAMFRELYEEVG).

This sequence belongs to the Nudix hydrolase family. RppH subfamily. A divalent metal cation is required as a cofactor.

Its function is as follows. Accelerates the degradation of transcripts by removing pyrophosphate from the 5'-end of triphosphorylated RNA, leading to a more labile monophosphorylated state that can stimulate subsequent ribonuclease cleavage. The polypeptide is RNA pyrophosphohydrolase (Vibrio cholerae serotype O1 (strain ATCC 39315 / El Tor Inaba N16961)).